The sequence spans 281 residues: Ribosomal protein L11 methyltransferase (281 aa).

Residues T133, G154, D175, and N216 each contribute to the S-adenosyl-L-methionine site.

This sequence belongs to the methyltransferase superfamily. PrmA family.

The protein localises to the cytoplasm. It carries out the reaction L-lysyl-[protein] + 3 S-adenosyl-L-methionine = N(6),N(6),N(6)-trimethyl-L-lysyl-[protein] + 3 S-adenosyl-L-homocysteine + 3 H(+). Functionally, methylates ribosomal protein L11. The sequence is that of Ribosomal protein L11 methyltransferase from Campylobacter jejuni (strain RM1221).